Here is a 444-residue protein sequence, read N- to C-terminus: Gentisate transporter (444 aa).

Helical transmembrane passes span 42 to 64 (AAVL…YGTV), 79 to 101 (LGTI…GRLS), 108 to 127 (AAVI…CAFA), 131 to 153 (WVFG…SVNA), 166 to 188 (AWAT…LALV), 198 to 220 (WRFM…MKVI), 252 to 274 (WISI…LGTW), 289 to 311 (ALMF…AWAG), 318 to 340 (RSGV…YPPV), 344 to 366 (YVIL…AAVA), 378 to 400 (LGWA…GLLL), and 410 to 428 (FIMF…SVLL).

It belongs to the major facilitator superfamily. Aromatic acid:H(+) symporter (AAHS) (TC 2.A.1.15) family.

The protein localises to the cell membrane. Functionally, transport of gentisate (2,5-dihydroxybenzoate) into the cell. Does not transport 3-hydroxybenzoate or benzoate. This chain is Gentisate transporter (genK), found in Corynebacterium glutamicum (strain ATCC 13032 / DSM 20300 / JCM 1318 / BCRC 11384 / CCUG 27702 / LMG 3730 / NBRC 12168 / NCIMB 10025 / NRRL B-2784 / 534).